Here is a 550-residue protein sequence, read N- to C-terminus: Cochlin (550 aa).

The first 24 residues, 1-24 (MWASWIPVLCLGVCLLLPPEPVGS), serve as a signal peptide directing secretion. One can recognise an LCCL domain in the interval 28–121 (VPIPITCSTR…QMLSRWSASF (94 aa)). 2 cysteine pairs are disulfide-bonded: cysteine 34–cysteine 50 and cysteine 54–cysteine 74. The N-linked (GlcNAc...) asparagine glycan is linked to asparagine 100. The segment covering 128–139 (SGTQEATGQAVS) has biased composition (polar residues). The segment at 128-158 (SGTQEATGQAVSTAHPATGKRLKKTPEKKTG) is disordered. 2 VWFA domains span residues 165–350 (DIAF…VQKL) and 367–537 (NIAF…VSDV). 2 N-linked (GlcNAc...) asparagine glycosylation sites follow: asparagine 221 and asparagine 436.

In terms of assembly, monomer. May form homodimer. Interacts with type II collagen. Interacts with SLC44A2. Interacts with ANXA2. N-glycosylated.

It localises to the secreted. The protein localises to the extracellular space. In terms of biological role, plays a role in the control of cell shape and motility in the trabecular meshwork. In Bos taurus (Bovine), this protein is Cochlin (COCH).